We begin with the raw amino-acid sequence, 75 residues long: UPF0352 protein YejL (75 aa).

The protein belongs to the UPF0352 family.

In Shigella flexneri, this protein is UPF0352 protein YejL.